The chain runs to 447 residues: Glutamine synthetase (447 aa).

The 86-residue stretch at 20 to 105 (RDVKFIRTQF…ILGDVYLPDG (86 aa)) folds into the GS beta-grasp domain. Residues 112–447 (PRYVLKTAIK…WELSRYLSML (336 aa)) form the GS catalytic domain. Mg(2+) contacts are provided by Glu-135 and Glu-137. Glu-187 serves as a coordination point for ATP. Mg(2+) is bound by residues Glu-192 and Glu-199. L-glutamate-binding positions include 243–244 (NG) and Gly-244. Mg(2+) is bound at residue His-248. An ATP-binding site is contributed by Ser-252. 3 residues coordinate L-glutamate: Arg-301, Glu-307, and Arg-319. 2 residues coordinate ATP: Arg-319 and Arg-324. Glu-336 provides a ligand contact to Mg(2+). Arg-338 contributes to the L-glutamate binding site.

The protein belongs to the glutamine synthetase family. As to quaternary structure, homohexamer. Interacts and forms stable complexes with the regulatory protein GlnK1. It depends on Mg(2+) as a cofactor.

Its subcellular location is the cytoplasm. It carries out the reaction L-glutamate + NH4(+) + ATP = L-glutamine + ADP + phosphate + H(+). With respect to regulation, directly stimulated by the effector molecule 2-oxoglutarate. Inhibited by GlnK1. 2-oxoglutarate antagonizes the inhibitory effects of GlnK1, but does not prevent GlnK1/GlnA1 complex formation. In terms of biological role, probably involved in nitrogen metabolism via ammonium assimilation. Catalyzes the ATP-dependent biosynthesis of glutamine from glutamate and ammonia. The chain is Glutamine synthetase from Methanosarcina mazei (strain ATCC BAA-159 / DSM 3647 / Goe1 / Go1 / JCM 11833 / OCM 88) (Methanosarcina frisia).